The sequence spans 76 residues: Small ribosomal subunit protein bS18 (76 aa).

This sequence belongs to the bacterial ribosomal protein bS18 family. Part of the 30S ribosomal subunit. Forms a tight heterodimer with protein bS6.

Binds as a heterodimer with protein bS6 to the central domain of the 16S rRNA, where it helps stabilize the platform of the 30S subunit. This chain is Small ribosomal subunit protein bS18, found in Nitrosomonas eutropha (strain DSM 101675 / C91 / Nm57).